The chain runs to 1538 residues: Lhr helicase/uracil glycosylase (1538 aa).

Residues 1 to 897 form a lhr-Core region; the sequence is MADNPDPSSL…ERRASVLSLD (897 aa). 8 residues coordinate ATP: Gln34, Lys57, Thr58, Asp179, Glu180, Ile398, Arg415, and His418. A Helicase ATP-binding domain is found at 38-235; the sequence is WHVAARSEHA…FLGGDRPVTV (198 aa). The DEVH box motif lies at 179 to 182; sequence DEVH. One can recognise a Helicase C-terminal domain in the interval 284-462; sequence GILDEVLRHR…NLTPPHNPLD (179 aa). A beta-sheet bundle region spans residues 463 to 552; that stretch reads VLAQQTVAAA…VTSGGTIPDR (90 aa). The segment at 553 to 623 is WH domain; that stretch reads GMYSVLLPEG…SARLPFWRGE (71 aa). Positions 624 to 897 are domain 4; that stretch reads GNGRPAELGE…ERRASVLSLD (274 aa). The interval 898–1538 is lhr-CTD; it reads SELLRNLLGQ…SSSPQGLDWG (641 aa). The disordered stretch occupies residues 1287-1312; that stretch reads SNARTSTRRSHRARRGRPVYAQPVSP. The span at 1292-1303 shows a compositional bias: basic residues; the sequence is STRRSHRARRGR.

It belongs to the Lhr helicase family. Homooligomerizes, probably a homotetramer. It depends on Ca(2+) as a cofactor. Uracil deglycosylase activity does not require a cofactor. is required as a cofactor.

It catalyses the reaction Couples ATP hydrolysis with the unwinding of duplex DNA by translocating in the 3'-5' direction.. The catalysed reaction is ATP + H2O = ADP + phosphate + H(+). The enzyme catalyses Hydrolyzes single-stranded DNA or mismatched double-stranded DNA and polynucleotides, releasing free uracil.. Its function is as follows. A 3'-5' helicase probably involved in DNA repair. Translocates in an ATP-dependent manner 3'-to-5' on single-stranded (ss)DNA, unwinding any encountered duplex nucleic acid. An RNA:DNA hybrid with a 3'-ssDNA loading strand is a 4.5-fold better helicase substrate than 3'-tailed double-stranded (ds)DNA; substrates where the helicase loads on a 3'-ssRNA tail (DNA:RNA and RNA:RNA) are not unwound. Unlike its M.smegmatis counterpart, the ATPase is not ssDNA-dependent. Forms a clamp around the ssDNA loading strand. Functionally, excises uracil residues from DNA; forked DNA with a dU residue is the best substrate followed by ssDNA. Inactive on dsDNA with a dU residue or DNA with an 8-oxoguanine residue. Uracil residues in DNA can arise as a result of misincorporation of dUMP residues by DNA polymerase or due to deamination of cytosine. This chain is Lhr helicase/uracil glycosylase, found in Escherichia coli (strain K12).